Consider the following 890-residue polypeptide: Phosphatidate phosphatase LPIN1 (890 aa).

Residues 1–108 (MNYVGQLAGQ…IPMHLATSPI (108 aa)) are N-LIP. Phosphoserine is present on residues serine 106 and serine 150. Disordered regions lie at residues 125 to 183 (VDRM…DMFP), 228 to 300 (SYPN…SSRK), 365 to 392 (KPPSASVVQTANKTDSPSRKRDKRSRHL), and 421 to 456 (SGLAKHASDNGARSANQSPQSVGSSGVDSGVESTSD). The span at 152–161 (VKKRRKRRRK) shows a compositional bias: basic residues. A Nuclear localization signal motif is present at residues 153–158 (KKRRKR). 2 stretches are compositionally biased toward basic and acidic residues: residues 162–172 (SQLDSLKRDDN) and 252–265 (SDSELVSKSTERTG). Phosphoserine is present on residues serine 252, serine 254, and serine 260. Threonine 264 is subject to Phosphothreonine. The residue at position 294 (serine 294) is a Phosphoserine. N6-acetyllysine is present on lysine 425. The span at 431-440 (GARSANQSPQ) shows a compositional bias: polar residues. A phosphoserine mark is found at serine 434, serine 438, and serine 449. Over residues 441–456 (SVGSSGVDSGVESTSD) the composition is skewed to low complexity. Lysine 565 participates in a covalent cross-link: Glycyl lysine isopeptide (Lys-Gly) (interchain with G-Cter in SUMO). A disordered region spans residues 566–616 (EESKPEQCLAGKAHSTGEQPPQLSLATRVKHESSSSDEERAAAKPSNAGHL). Residues 581–590 (TGEQPPQLSL) are compositionally biased toward polar residues. Residues 594–607 (VKHESSSSDEERAA) are compositionally biased toward basic and acidic residues. An N6-acetyllysine modification is found at lysine 595. Residue lysine 595 forms a Glycyl lysine isopeptide (Lys-Gly) (interchain with G-Cter in SUMO) linkage. 2 positions are modified to phosphoserine: serine 600 and serine 601. The segment at 624 to 830 (YKKTLRLTSE…VNPKGELVQE (207 aa)) is C-LIP. The short motif at 678 to 682 (DIDGT) is the DXDXT motif element. The short motif at 689–693 (LGHIL) is the LXXIL motif element. 2 positions are modified to phosphoserine: serine 887 and serine 889.

This sequence belongs to the lipin family. In terms of assembly, interacts (via LXXIL motif) with PPARA. Interacts with PPARGC1A. Interaction with PPARA and PPARGC1A leads to the formation of a complex that modulates gene transcription. Interacts with MEF2C. It depends on Mg(2+) as a cofactor. Mn(2+) is required as a cofactor. Post-translationally, phosphorylated at multiple sites by mTOR in response to insulin, leading to its inactivation. Phosphorylation does not affect the catalytic activity but regulates the localization. Phosphorylation is decreased by epinephrine. Dephosphorylated by the CTDNEP1-CNEP1R1 complex. Dephosphorylation following mTOR inhibition promotes its activity. Acetylation at Lys-425 and Lys-595 by KAT5 in response to fatty acids promotes translocation to the endoplasmic reticulum and synthesis of diacylglycerol. In terms of processing, sumoylated. In terms of tissue distribution, specifically expressed in skeletal muscle. Also abundant in adipose tissue. Lower levels in some portions of the digestive tract.

Its subcellular location is the cytoplasm. The protein resides in the cytosol. The protein localises to the endoplasmic reticulum membrane. It is found in the nucleus membrane. It carries out the reaction a 1,2-diacyl-sn-glycero-3-phosphate + H2O = a 1,2-diacyl-sn-glycerol + phosphate. It catalyses the reaction 1-octadecanoyl-2-(4Z,7Z,10Z,13Z,16Z,19Z-docosahexaenoyl)-sn-glycero-3-phosphate + H2O = 1-octadecanoyl-2-(4Z,7Z,10Z,13Z,16Z,19Z-docosahexaenoyl)-sn-glycerol + phosphate. The enzyme catalyses 1-octadecanoyl-2-(5Z,8Z,11Z,14Z-eicosatetraenoyl)-sn-glycero-3-phosphate + H2O = 1-octadecanoyl-2-(5Z,8Z,11Z,14Z-eicosatetraenoyl)-sn-glycerol + phosphate. The catalysed reaction is 1-octadecanoyl-2-(9Z,12Z-octadecadienoyl)-sn-glycero-3-phosphate + H2O = 1-octadecanoyl-2-(9Z,12Z)-octadecadienoyl-sn-glycerol + phosphate. It carries out the reaction 1-octadecanoyl-2-(9Z-octadecenoyl)-sn-glycero-3-phosphate + H2O = 1-octadecanoyl-2-(9Z-octadecenoyl)-sn-glycerol + phosphate. It catalyses the reaction 1-hexadecanoyl-2-(4Z,7Z,10Z,13Z,16Z,19Z-docosahexaenoyl)-sn-glycero-3-phosphate + H2O = 1-hexadecanoyl-2-(4Z,7Z,10Z,13Z,16Z,19Z-docosahexaenoyl)-sn-glycerol + phosphate. The enzyme catalyses 1,2-dioctadecanoyl-sn-glycero-3-phosphate + H2O = 1,2-dioctadecanoyl-sn-glycerol + phosphate. The catalysed reaction is 1-hexadecanoyl-2-(5Z,8Z,11Z,14Z-eicosatetraenoyl)-sn-glycero-3-phosphate + H2O = 1-hexadecanoyl-2-(5Z,8Z,11Z,14Z-eicosatetraenoyl)-sn-glycerol + phosphate. It carries out the reaction 1-hexadecanoyl-2-(9Z,12Z-octadecadienoyl)-sn-glycero-3-phosphate + H2O = 1-hexadecanoyl-2-(9Z,12Z-octadecadienoyl)-sn-glycerol + phosphate. It catalyses the reaction 1-hexadecanoyl-2-(9Z-octadecenoyl)-sn-glycero-3-phosphate + H2O = 1-hexadecanoyl-2-(9Z-octadecenoyl)-sn-glycerol + phosphate. The enzyme catalyses 1,2-di-(4Z,7Z,10Z,13Z,16Z,19Z-docosahexaenoyl)-sn-glycero-3-phosphate + H2O = 1,2-di-(4Z,7Z,10Z,13Z,16Z,19Z-docosahexaenoyl)-sn-glycerol + phosphate. The catalysed reaction is 1,2-di-(5Z,8Z,11Z,14Z)-eicosatetraenoyl-sn-glycero-3-phosphate + H2O = 1,2-di-(5Z,8Z,11Z,14Z)-eicosatetraenoyl-sn-glycerol + phosphate. It carries out the reaction 1,2-di-(9Z,12Z-octadecadienoyl)-sn-glycero-3-phosphate + H2O = 1,2-di-(9Z,12Z-octadecadienoyl)-sn-glycerol + phosphate. It catalyses the reaction 1,2-di-(9Z-octadecenoyl)-sn-glycero-3-phosphate + H2O = 1,2-di-(9Z-octadecenoyl)-sn-glycerol + phosphate. The enzyme catalyses 1,2-dihexadecanoyl-sn-glycero-3-phosphate + H2O = 1,2-dihexadecanoyl-sn-glycerol + phosphate. With respect to regulation, potently inhibited by sphingolipids, in particular, the sphingoid bases sphinganine and sphingosine and ceramide-1-phosphate. Inhibited by concentrations of Mg(2+) and Mn(2+) above their optimums and by Ca(2+), Zn(2+), N-ethylmaleimide and propranolol. Sertraline and propanolol inhibit activity in dose-dependent manners with IC(50) values of 103 uM and 226 uM, respectively. Its activity is regulated as follows. Sertraline and propanolol inhibit activity in dose-dependent manners with IC(50) values of 108 uM and 271 uM, respectively. With respect to regulation, sertraline and propanolol inhibit activity in dose-dependent manners with IC(50) values of 143 uM and 227 uM, respectively. Its function is as follows. Acts as a magnesium-dependent phosphatidate phosphatase enzyme which catalyzes the conversion of phosphatidic acid to diacylglycerol during triglyceride, phosphatidylcholine and phosphatidylethanolamine biosynthesis and therefore controls the metabolism of fatty acids at different levels. Is involved in adipocyte differentiation. Recruited at the mitochondrion outer membrane and is involved in mitochondrial fission by converting phosphatidic acid to diacylglycerol. Acts also as nuclear transcriptional coactivator for PPARGC1A/PPARA regulatory pathway to modulate lipid metabolism gene expression. In Homo sapiens (Human), this protein is Phosphatidate phosphatase LPIN1.